Consider the following 196-residue polypeptide: tRNA (pseudouridine(54)-N(1))-methyltransferase (196 aa).

L126 lines the S-adenosyl-L-methionine pocket.

This sequence belongs to the methyltransferase superfamily. TrmY family. In terms of assembly, homodimer.

It localises to the cytoplasm. It carries out the reaction pseudouridine(54) in tRNA + S-adenosyl-L-methionine = N(1)-methylpseudouridine(54) in tRNA + S-adenosyl-L-homocysteine + H(+). Functionally, specifically catalyzes the N1-methylation of pseudouridine at position 54 (Psi54) in tRNAs. This chain is tRNA (pseudouridine(54)-N(1))-methyltransferase, found in Halobacterium salinarum (strain ATCC 700922 / JCM 11081 / NRC-1) (Halobacterium halobium).